A 292-amino-acid polypeptide reads, in one-letter code: Ribosomal protein L11 methyltransferase (292 aa).

Residues T144, G165, D187, and N229 each contribute to the S-adenosyl-L-methionine site.

The protein belongs to the methyltransferase superfamily. PrmA family.

It localises to the cytoplasm. It carries out the reaction L-lysyl-[protein] + 3 S-adenosyl-L-methionine = N(6),N(6),N(6)-trimethyl-L-lysyl-[protein] + 3 S-adenosyl-L-homocysteine + 3 H(+). In terms of biological role, methylates ribosomal protein L11. This Pseudomonas putida (strain ATCC 700007 / DSM 6899 / JCM 31910 / BCRC 17059 / LMG 24140 / F1) protein is Ribosomal protein L11 methyltransferase.